Reading from the N-terminus, the 579-residue chain is L-ascorbate oxidase (579 aa).

The signal sequence occupies residues 1–30; sequence MLQMGKAREPNFLILFFFGLILAFGISSEG. 2 consecutive Plastocyanin-like domains span residues 33 to 152 and 164 to 330; these read IRHY…LIVD and DGEI…NYLP. Intrachain disulfides connect Cys-49-Cys-231, Cys-111-Cys-568, and Cys-210-Cys-223. Positions 90 and 92 each coordinate Cu cation. Asn-122 carries an N-linked (GlcNAc...) asparagine glycan. Cu cation-binding residues include His-134 and His-136. 2 N-linked (GlcNAc...) asparagine glycosylation sites follow: Asn-355 and Asn-470. Residues 374–553 form the Plastocyanin-like 3 domain; sequence NRRIFLLNTQ…HMGMGVVFAE (180 aa). 8 residues coordinate Cu cation: His-475, His-478, His-480, His-536, Cys-537, His-538, His-542, and Met-547.

This sequence belongs to the multicopper oxidase family. In terms of assembly, dimer. Requires Cu cation as cofactor.

The protein resides in the secreted. It catalyses the reaction 4 L-ascorbate + O2 = 4 monodehydro-L-ascorbate radical + 2 H2O. In terms of biological role, may be involved in a redox system involving ascorbic acid. This Cucurbita maxima (Pumpkin) protein is L-ascorbate oxidase (AAO).